Reading from the N-terminus, the 365-residue chain is 3-isopropylmalate dehydrogenase (365 aa).

78-89 (GPKWGTGKVRPE) is a binding site for NAD(+). R96, R106, R135, and D224 together coordinate substrate. Residues D224, D249, and D253 each contribute to the Mg(2+) site. 289 to 301 (GSAPDISGKGIVN) serves as a coordination point for NAD(+).

Belongs to the isocitrate and isopropylmalate dehydrogenases family. In terms of assembly, homodimer. Mg(2+) serves as cofactor. Requires Mn(2+) as cofactor.

Its subcellular location is the cytoplasm. The catalysed reaction is (2R,3S)-3-isopropylmalate + NAD(+) = 4-methyl-2-oxopentanoate + CO2 + NADH. It participates in amino-acid biosynthesis; L-leucine biosynthesis; L-leucine from 3-methyl-2-oxobutanoate: step 3/4. In terms of biological role, catalyzes the oxidation of 3-carboxy-2-hydroxy-4-methylpentanoate (3-isopropylmalate) to 3-carboxy-4-methyl-2-oxopentanoate. The product decarboxylates to 4-methyl-2 oxopentanoate. The chain is 3-isopropylmalate dehydrogenase (LEUC) from Zymoseptoria tritici (Speckled leaf blotch fungus).